The primary structure comprises 477 residues: Ribulose bisphosphate carboxylase large chain (477 aa).

The propeptide occupies M1–S2. Position 3 is an N-acetylproline (P3). The residue at position 14 (K14) is an N6,N6,N6-trimethyllysine. Positions 123 and 173 each coordinate substrate. The active-site Proton acceptor is the K175. K177 contributes to the substrate binding site. Positions 201, 203, and 204 each coordinate Mg(2+). K201 is subject to N6-carboxylysine. H294 serves as the catalytic Proton acceptor. Substrate-binding residues include R295, H327, and S379.

Belongs to the RuBisCO large chain family. Type I subfamily. In terms of assembly, heterohexadecamer of 8 large chains and 8 small chains; disulfide-linked. The disulfide link is formed within the large subunit homodimers. Mg(2+) is required as a cofactor. The disulfide bond which can form in the large chain dimeric partners within the hexadecamer appears to be associated with oxidative stress and protein turnover.

Its subcellular location is the plastid. It localises to the chloroplast. It catalyses the reaction 2 (2R)-3-phosphoglycerate + 2 H(+) = D-ribulose 1,5-bisphosphate + CO2 + H2O. It carries out the reaction D-ribulose 1,5-bisphosphate + O2 = 2-phosphoglycolate + (2R)-3-phosphoglycerate + 2 H(+). Functionally, ruBisCO catalyzes two reactions: the carboxylation of D-ribulose 1,5-bisphosphate, the primary event in carbon dioxide fixation, as well as the oxidative fragmentation of the pentose substrate in the photorespiration process. Both reactions occur simultaneously and in competition at the same active site. This Agrostis stolonifera (Creeping bentgrass) protein is Ribulose bisphosphate carboxylase large chain.